The primary structure comprises 920 residues: WD repeat-containing protein 47 (920 aa).

The region spanning Lys10–Asn42 is the LisH domain. One can recognise a CTLH domain in the interval Phe45–Ser102. At Thr285 the chain carries Phosphothreonine. 4 positions are modified to phosphoserine: Ser289, Ser292, Ser297, and Ser312. Positions Tyr371–Thr380 are enriched in basic and acidic residues. The interval Tyr371–Asp422 is disordered. Residue Ser423 is modified to Phosphoserine. The segment at Leu501–Ser594 is disordered. The span at Ser506–Thr523 shows a compositional bias: low complexity. Residues Asn538–His552 are compositionally biased toward polar residues. Thr543 carries the phosphothreonine modification. WD repeat units lie at residues Glu605–Ala644, His660–Thr699, Met707–Leu749, Gly754–Val792, Gly799–Ser838, Pro841–Leu880, and Glu887–Ser919.

Interacts with MAP1S (via WD repeats). In terms of tissue distribution, enriched in the nervous system (at protein level).

The protein resides in the cytoplasm. It is found in the cytoskeleton. This chain is WD repeat-containing protein 47 (Wdr47), found in Mus musculus (Mouse).